A 187-amino-acid polypeptide reads, in one-letter code: Accessory gene regulator protein B (187 aa).

5 helical membrane-spanning segments follow: residues 49-69 (IAYI…FYLI), 82-102 (FWCY…VLHF), 107-127 (TLMM…APAA), 143-163 (YFSI…KEPY), and 164-184 (TQFI…IYYS).

It belongs to the AgrB family.

It is found in the cell membrane. Essential for the production of a quorum sensing system signal molecule, the autoinducing peptide (AIP). This quorum sensing system is responsible for the regulation of the expression of virulence factor genes. Involved in the proteolytic processing of AgrD, the precursor of AIP. In Staphylococcus aureus (strain MW2), this protein is Accessory gene regulator protein B.